A 202-amino-acid chain; its full sequence is Peptide methionine sulfoxide reductase B2, chloroplastic (202 aa).

A chloroplast-targeting transit peptide spans 1 to 63 (MAFNIITPGR…RRGFHGGRIV (63 aa)). Residues 77-198 (EEEWRAILSP…NSISLKFTPE (122 aa)) enclose the MsrB domain. Zn(2+) is bound by residues cysteine 116, cysteine 119, cysteine 162, and cysteine 165. Cysteine 134 and cysteine 187 form a disulfide bridge. Cysteine 187 (nucleophile) is an active-site residue.

It belongs to the MsrB Met sulfoxide reductase family. Zn(2+) serves as cofactor. As to expression, expressed in stems, young leaves, floral buds and flowers. Expressed at low levels in roots, mature leaves and siliques (at protein level).

Its subcellular location is the plastid. The protein resides in the chloroplast. The enzyme catalyses L-methionyl-[protein] + [thioredoxin]-disulfide + H2O = L-methionyl-(R)-S-oxide-[protein] + [thioredoxin]-dithiol. Catalyzes the reduction of methionine sulfoxide (MetSO) to methionine in proteins. Specifically reduces the MetSO R-enantiomer. Plays a protective role against oxidative stress by restoring activity to proteins that have been inactivated by methionine oxidation. May play an essential function in association with MSRB1 in maintaining vegetative growth during environmental constraints, through the preservation of photosynthetic antennae. MSRB1 and MSRB2 account for most of the leaf peptide MSR capacity. The polypeptide is Peptide methionine sulfoxide reductase B2, chloroplastic (Arabidopsis thaliana (Mouse-ear cress)).